Consider the following 343-residue polypeptide: Uroporphyrinogen decarboxylase (343 aa).

Substrate contacts are provided by residues arginine 25–arginine 29, aspartate 75, tyrosine 152, serine 207, and histidine 323.

It belongs to the uroporphyrinogen decarboxylase family. Homodimer.

It is found in the cytoplasm. The enzyme catalyses uroporphyrinogen III + 4 H(+) = coproporphyrinogen III + 4 CO2. It participates in porphyrin-containing compound metabolism; protoporphyrin-IX biosynthesis; coproporphyrinogen-III from 5-aminolevulinate: step 4/4. In terms of biological role, catalyzes the decarboxylation of four acetate groups of uroporphyrinogen-III to yield coproporphyrinogen-III. This is Uroporphyrinogen decarboxylase from Jannaschia sp. (strain CCS1).